Reading from the N-terminus, the 333-residue chain is Glycerol-3-phosphate dehydrogenase [NAD(P)+] (333 aa).

Positions 10, 11, 31, 32, and 105 each coordinate NADPH. Sn-glycerol 3-phosphate contacts are provided by lysine 105, glycine 136, and serine 138. Alanine 140 lines the NADPH pocket. Sn-glycerol 3-phosphate is bound by residues lysine 191, aspartate 244, serine 254, arginine 255, and asparagine 256. Catalysis depends on lysine 191, which acts as the Proton acceptor. An NADPH-binding site is contributed by arginine 255. Valine 279 and glutamate 281 together coordinate NADPH.

It belongs to the NAD-dependent glycerol-3-phosphate dehydrogenase family.

Its subcellular location is the cytoplasm. The catalysed reaction is sn-glycerol 3-phosphate + NAD(+) = dihydroxyacetone phosphate + NADH + H(+). The enzyme catalyses sn-glycerol 3-phosphate + NADP(+) = dihydroxyacetone phosphate + NADPH + H(+). Its pathway is membrane lipid metabolism; glycerophospholipid metabolism. In terms of biological role, catalyzes the reduction of the glycolytic intermediate dihydroxyacetone phosphate (DHAP) to sn-glycerol 3-phosphate (G3P), the key precursor for phospholipid synthesis. This is Glycerol-3-phosphate dehydrogenase [NAD(P)+] from Chlorobium limicola (strain DSM 245 / NBRC 103803 / 6330).